Reading from the N-terminus, the 2475-residue chain is Non-reducing polyketide synthase ausA (2475 aa).

The N-terminal acylcarrier protein transacylase domain (SAT) stretch occupies residues 14–253; it reads VLFGSKYSEI…HHADHLSAAQ (240 aa). The Ketosynthase family 3 (KS3) domain occupies 384-800; that stretch reads SIPIAVTGLA…GSNAAIVLKE (417 aa). Residues cysteine 549, histidine 684, and histidine 723 each act as for beta-ketoacyl synthase activity in the active site. Residues 910–1212 form a malonyl-CoA:ACP transacylase (MAT) domain region; sequence LCFGGQTGNK…CPMDLSGPQA (303 aa). Serine 997 (for acyl/malonyl transferase activity) is an active-site residue. The segment at 1279 to 1407 is N-terminal hotdog fold; it reads EDLKLVQLLK…GTISLSPGAD (129 aa). The PKS/mFAS DH domain maps to 1279-1586; it reads EDLKLVQLLK…FTSVSIQSLR (308 aa). Residues 1282-1585 form a product template (PT) domain region; sequence KLVQLLKNEG…TFTSVSIQSL (304 aa). Histidine 1312 serves as the catalytic Proton acceptor; for dehydratase activity. Residues 1435–1586 are C-terminal hotdog fold; the sequence is SSSGLKRSTV…FTSVSIQSLR (152 aa). The active-site Proton donor; for dehydratase activity is aspartate 1493. The Carrier domain maps to 1626–1703; it reads SSNGDDLRTV…ALVQRIFPGR (78 aa). Position 1663 is an O-(pantetheine 4'-phosphoryl)serine (serine 1663). The methyltransferase (CMeT) domain stretch occupies residues 1865–2098; sequence QHTSEHKLLH…GFNWVDWTDN (234 aa). A thioesterase (TE) domain region spans residues 2127–2475; that stretch reads SAIHEETVVY…YEFLRSHVGL (349 aa). Residues serine 2250, aspartate 2412, and histidine 2444 each act as for thioesterase activity in the active site.

The catalysed reaction is 3 malonyl-CoA + acetyl-CoA + 2 S-adenosyl-L-methionine = 3,5-dimethylorsellinate + 2 S-adenosyl-L-homocysteine + 3 CO2 + 4 CoA. It functions in the pathway secondary metabolite biosynthesis; terpenoid biosynthesis. Non-reducing polyketide synthase; part of the gene cluster A that mediates the biosynthesis of the fungal meroterpenoid acetoxydehydroaustin. The first step of the pathway is the synthesis of 3,5-dimethylorsellinic acid by the polyketide synthase ausA. 3,5-dimethylorsellinic acid is then prenylated by the polyprenyl transferase ausN. Further epoxidation by the FAD-dependent monooxygenase ausM and cyclization by the probable terpene cyclase ausL lead to the formation of protoaustinoid A. Protoaustinoid A is then oxidized to spiro-lactone preaustinoid A3 by the combined action of the FAD-binding monooxygenases ausB and ausC, and the dioxygenase ausE. Acid-catalyzed keto-rearrangement and ring contraction of the tetraketide portion of preaustinoid A3 by ausJ lead to the formation of preaustinoid A4. The aldo-keto reductase ausK, with the help of ausH, is involved in the next step by transforming preaustinoid A4 into isoaustinone which is in turn hydroxylated by the P450 monooxygenase ausI to form austinolide. The cytochrome P450 monooxygenase ausG then modifies austinolide to austinol. Austinol is further acetylated to austin by the O-acetyltransferase ausP, which spontaneously changes to dehydroaustin. The cytochrome P450 monooxygenase then converts dehydroaustin is into 7-dehydrodehydroaustin. The hydroxylation catalyzed by ausR permits the second O-acetyltransferase ausQ to add an additional acetyl group to the molecule, leading to the formation of acetoxydehydroaustin. Due to genetic rearrangements of the clusters and the subsequent loss of some enzymes, the end product of the Penicillium brasilianum austinoid biosynthesis clusters is acetoxydehydroaustin. This Penicillium brasilianum protein is Non-reducing polyketide synthase ausA.